Consider the following 550-residue polypeptide: Glucose-6-phosphate isomerase (550 aa).

Catalysis depends on glutamate 356, which acts as the Proton donor. Active-site residues include histidine 387 and lysine 515.

The protein belongs to the GPI family.

The protein localises to the cytoplasm. The enzyme catalyses alpha-D-glucose 6-phosphate = beta-D-fructose 6-phosphate. Its pathway is carbohydrate biosynthesis; gluconeogenesis. The protein operates within carbohydrate degradation; glycolysis; D-glyceraldehyde 3-phosphate and glycerone phosphate from D-glucose: step 2/4. Functionally, catalyzes the reversible isomerization of glucose-6-phosphate to fructose-6-phosphate. The sequence is that of Glucose-6-phosphate isomerase from Vibrio atlanticus (strain LGP32) (Vibrio splendidus (strain Mel32)).